A 111-amino-acid polypeptide reads, in one-letter code: UPF0235 protein glr3835 (111 aa).

This sequence belongs to the UPF0235 family.

The sequence is that of UPF0235 protein glr3835 from Gloeobacter violaceus (strain ATCC 29082 / PCC 7421).